The primary structure comprises 70 residues: Small ribosomal subunit protein bS21 (70 aa).

The protein belongs to the bacterial ribosomal protein bS21 family.

The chain is Small ribosomal subunit protein bS21 from Azoarcus sp. (strain BH72).